Consider the following 268-residue polypeptide: Cell division cycle-associated protein 3 (268 aa).

2 disordered regions span residues 1–232 and 247–268; these read MGSA…SELK and GRAWEQGQDHDKENQHFPLVES. S29 and S31 each carry phosphoserine. Position 37 is a phosphothreonine (T37). Phosphoserine occurs at positions 44, 64, and 68. A compositionally biased stretch (basic and acidic residues) spans 56-66; sequence EGLKHAQDSDP. Phosphothreonine is present on T76. Phosphoserine is present on residues S87 and S94. Residues 91-120 form an F-box-like region; sequence KQLSEVFETEDSKSNLPPEPVLPPEAPLSS. Over residues 107 to 116 the composition is skewed to pro residues; sequence PPEPVLPPEA. Positions 117 to 126 are enriched in low complexity; the sequence is PLSSELDLPL. Polar residues-rich tracts occupy residues 128-149, 158-169, and 178-194; these read TQLSVEEQMPPWNQTEFPSKQV, PTETPVASQSSD, and PRSSGSMRNRWKPNSSK. The residue at position 199 (S199) is a Phosphoserine. Phosphothreonine is present on T202. The segment covering 205-215 has biased composition (polar residues); that stretch reads QDDNSPGTLTL. A Phosphoserine modification is found at S209. Phosphothreonine is present on T212. The short motif at 258–260 is the KEN box element; the sequence is KEN.

Interacts with SKP1. Part of a SCF (SKP1-cullin-F-box) protein ligase complex. Ubiquitinated and degraded by the APC/C-Cdh1 complex.

The protein resides in the cytoplasm. It localises to the cytosol. It functions in the pathway protein modification; protein ubiquitination. Its function is as follows. F-box-like protein which is required for entry into mitosis. Acts by participating in E3 ligase complexes that mediate the ubiquitination and degradation of WEE1 kinase at G2/M phase. This is Cell division cycle-associated protein 3 (CDCA3) from Homo sapiens (Human).